The chain runs to 273 residues: uncharacterized protein (273 aa).

Residues 7–25 (FFRWAFLIATVYVAYYFLV) form a helical membrane-spanning segment. 2 disordered regions span residues 34–154 (KPQK…LKMK) and 168–273 (LHNS…DSLW). Residues 36–54 (QKSKLTKLGKQKQRQKQKN) are compositionally biased toward basic residues. The segment covering 55 to 91 (TKKDTLVNRETPSKKSQKLETSDALKSKSKDSSKKEP) has biased composition (basic and acidic residues). Positions 92–101 (VVVPKKGTPK) are enriched in low complexity. Positions 115-144 (PKKEKLVGKNPAEKEDTTDVEDTQKLEQKH) are enriched in basic and acidic residues. The segment covering 145–154 (STTPSSLKMK) has biased composition (polar residues). A compositionally biased stretch (basic residues) spans 201–212 (KRQRQNQQKKLR). The segment covering 213–240 (AKEMQELADEEQRRRLAAHRKELHEANR) has biased composition (basic and acidic residues). Polar residues predominate over residues 245-266 (LNNSSRSAYSYINNGQAGSSKG).

The protein localises to the cytoplasm. Its subcellular location is the membrane. This is an uncharacterized protein from Schizosaccharomyces pombe (strain 972 / ATCC 24843) (Fission yeast).